We begin with the raw amino-acid sequence, 179 residues long: Large ribosomal subunit protein uL5 (179 aa).

The protein belongs to the universal ribosomal protein uL5 family. As to quaternary structure, part of the 50S ribosomal subunit; part of the 5S rRNA/L5/L18/L25 subcomplex. Contacts the 5S rRNA and the P site tRNA. Forms a bridge to the 30S subunit in the 70S ribosome.

In terms of biological role, this is one of the proteins that bind and probably mediate the attachment of the 5S RNA into the large ribosomal subunit, where it forms part of the central protuberance. In the 70S ribosome it contacts protein S13 of the 30S subunit (bridge B1b), connecting the 2 subunits; this bridge is implicated in subunit movement. Contacts the P site tRNA; the 5S rRNA and some of its associated proteins might help stabilize positioning of ribosome-bound tRNAs. The chain is Large ribosomal subunit protein uL5 from Geobacillus kaustophilus (strain HTA426).